The primary structure comprises 156 residues: Small ribosomal subunit protein uS7 (156 aa).

The protein belongs to the universal ribosomal protein uS7 family. In terms of assembly, part of the 30S ribosomal subunit. Contacts proteins S9 and S11.

Functionally, one of the primary rRNA binding proteins, it binds directly to 16S rRNA where it nucleates assembly of the head domain of the 30S subunit. Is located at the subunit interface close to the decoding center, probably blocks exit of the E-site tRNA. In Cupriavidus metallidurans (strain ATCC 43123 / DSM 2839 / NBRC 102507 / CH34) (Ralstonia metallidurans), this protein is Small ribosomal subunit protein uS7.